The primary structure comprises 74 residues: Ferredoxin MycCII (74 aa).

Residues 1 to 29 form the 4Fe-4S ferredoxin-type domain; that stretch reads MRIVLDAERCVGAGQCEATAPELFTQGDD. Cys10, Cys16, and Cys54 together coordinate [3Fe-4S] cluster.

[3Fe-4S] cluster serves as cofactor.

Its pathway is antibiotic biosynthesis; mycinamicin biosynthesis. Specific electron transport protein capable of effectively supporting cytochrome P450 MycCI activity in the biosynthesis of mycinamicin, a 16-membered macrolide antibiotic. In Micromonospora griseorubida, this protein is Ferredoxin MycCII.